The sequence spans 231 residues: Uracil-DNA glycosylase (231 aa).

Asp-71 functions as the Proton acceptor in the catalytic mechanism.

This sequence belongs to the uracil-DNA glycosylase (UDG) superfamily. UNG family.

Its subcellular location is the cytoplasm. The enzyme catalyses Hydrolyzes single-stranded DNA or mismatched double-stranded DNA and polynucleotides, releasing free uracil.. Excises uracil residues from the DNA which can arise as a result of misincorporation of dUMP residues by DNA polymerase or due to deamination of cytosine. The protein is Uracil-DNA glycosylase of Pseudomonas aeruginosa (strain UCBPP-PA14).